The following is a 413-amino-acid chain: Ras association domain-containing protein 5 (413 aa).

The interval Met-1–Pro-105 is disordered. Residues Ala-61–His-74 show a composition bias toward basic and acidic residues. A Phorbol-ester/DAG-type zinc finger spans residues Gly-117–Cys-165. Ser-177 and Ser-274 each carry phosphoserine. Residues Pro-265 to Thr-359 form the Ras-associating domain. The residue at position 347 (Thr-347) is a Phosphothreonine. An SARAH domain is found at Asp-361–Ser-408.

In terms of assembly, interacts directly with activated HRAS; a RASSF5-STK4/MST1 complex probably associates with activated HRAS. Interacts with KRAS. Probably interacts with Ras-like GTPases RRAS, MRAS, RAP1B, RAP2A and RALA. Interacts with RRAS2. Can self-associate. Interacts with RSSF1 isoform A. The RSSF1 isoform A-RSSF5 heterodimer probably mediates the association of RSSF1 with HRAS. Isoform 2 interacts with activated RAP1A and ITGAL/LFA-1. Binds STK4/MST1, inhibiting STK4/MST1 autoactivation.

It is found in the cytoplasm. It localises to the cytoskeleton. Potential tumor suppressor. Seems to be involved in lymphocyte adhesion by linking RAP1A activation upon T-cell receptor or chemokine stimulation to integrin activation. Stimulates lymphocyte polarization and the patch-like distribution of ITGAL/LFA-1, resulting in an enhanced adhesion to ICAM1. Together with RAP1A may participate in regulation of microtubule growth. The association with activated RAP1A is required for directional movement of endothelial cells during wound healing. May be involved in regulation of Ras apoptotic function. The RASSF5-STK4/MST1 complex may mediate HRAS and KRAS induced apoptosis. This chain is Ras association domain-containing protein 5 (Rassf5), found in Rattus norvegicus (Rat).